Here is a 493-residue protein sequence, read N- to C-terminus: Cytochrome P450 monooxygenase olcG (493 aa).

The helical transmembrane segment at 15–35 (GILATGALVIFVALFLATFQF) threads the bilayer. A heme-binding site is contributed by Cys429.

It belongs to the cytochrome P450 family. The cofactor is heme.

It localises to the membrane. It functions in the pathway secondary metabolite biosynthesis; terpenoid biosynthesis. Its function is as follows. Cytochrome P450 monooxygenase; part of the gene cluster that mediates the biosynthesis of 15-deoxyoxalicine B. The first step of the pathway is the synthesis of nicotinyl-CoA from nicotinic acid by the nicotinic acid-CoA ligase olcI. Nicotinyl-CoA is then a substrate of polyketide synthase olcA to produce 4-hydroxy-6-(3-pyridinyl)-2H-pyran-2-one (HPPO) which is further prenylated by the polyprenyl transferase olcH to yield geranylgeranyl-HPPO. Geranylgeranyl pyrophosphate is provided by the cluster-specific geranylgeranyl pyrophosphate synthase olcC. The FAD-dependent monooxygenase olcE catalyzes the epoxidation of geranylgeranyl-HPPO and the terpene cyclase olcD catalyzes the cyclization of the terpenoid component, resulting in the formation of the tricyclic terpene moiety seen in predecaturin E. The cytochrome P450 monooxygenase then catalyzes the allylic oxidation of predecaturin E, which is followed by spirocylization with concomitant loss of one molecule of water to form decaturin E. Decaturin E is the substrate of the cytochrome P450 monooxygenase olcJ which hydroxylates it at the C-29 position to form decaturin F. The short-chain dehydrogenase/reductase olcF may catalyze the oxidation of decaturin F to generate the 29-hydroxyl-27-one intermediate, and subsequent hemiacetal formation probably leads to the formation of decaturin C. The dioxygenase olcK may be a peroxisomal enzyme that catalyzes the hydroxylation of decaturin C into decaturin A once decaturin C is shuttled into the peroxisome by the MFS transporter olcL. Finally the cytochrome P450 monooxygenase olcB catalyzes the oxidative rearrangement to yield 15-deoxyoxalicine B. In the absence of olcJ, decaturin E may be shunted to a pathway in which it is oxidized to a ketone, possibly by olcF, to form decaturin D, which undergoes further allylic oxidation to yield decaturin G. Moreover, in the absence of oclK or oclL, oclB can convert decaturin C into 15-deoxyoxalicine A. This Penicillium canescens protein is Cytochrome P450 monooxygenase olcG.